We begin with the raw amino-acid sequence, 499 residues long: Rhodopsin, GQ-coupled (499 aa).

Topologically, residues 1–50 (MADNKSTLPGLPDINGTLNRSMTPNTGWEGPYDMSVHLHWTQFPPVTEEW) are extracellular. Residues N4, N15, and N19 are each glycosylated (N-linked (GlcNAc...) asparagine). The helical transmembrane segment at 51–75 (HYIIGVYITIVGLLGIMGNTTVVYI) threads the bilayer. Topologically, residues 76 to 87 (FSNTKSLRSPSN) are cytoplasmic. Residues 88–114 (LFVVNLAVSDLIFSAVNGFPLLTVSSF) form a helical membrane-spanning segment. Residues 115–128 (HQKWIFGSLFCQLY) lie on the Extracellular side of the membrane. C125 and C203 are disulfide-bonded. A helical membrane pass occupies residues 129-148 (GFVGGVFGLMSINTLTAISI). Topologically, residues 149–168 (DRYVVITKPLQASQTMTRRK) are cytoplasmic. The helical transmembrane segment at 169-192 (VHLMIVIVWVLSILLSIPPFFGWG) threads the bilayer. The Extracellular portion of the chain corresponds to 193–216 (AYIPEGFQTSCTFDYLTKTARTRT). A helical membrane pass occupies residues 217–244 (YIVVLYLFGFLIPLIIIGVCYVLIIRGV). The Cytoplasmic portion of the chain corresponds to 245-278 (RRHDQKMLTITRSMKTEDARANNKRARSELRISK). The chain crosses the membrane as a helical span at residues 279-302 (IAMTVTCLFIISWSPYAIIALIAQ). Topologically, residues 303–310 (FGPAHWIT) are extracellular. A helical membrane pass occupies residues 311–335 (PLVSELPMMLAKSSSMHNPVVYALS). The residue at position 322 (K322) is an N6-(retinylidene)lysine. The Cytoplasmic portion of the chain corresponds to 336–499 (HPKFRKALYQ…QRVNGLTFNS (164 aa)). Residues C353 and C354 are each lipidated (S-palmitoyl cysteine).

This sequence belongs to the G-protein coupled receptor 1 family. Opsin subfamily. Post-translationally, phosphorylated on some or all of the serine and threonine residues present in the C-terminal region. As to expression, retina. Expressed in the depolarizing cell layer of the photoreceptor cells distant from the lens.

It localises to the membrane. In terms of biological role, visual pigments such as rhodopsin and porphyropsin are light-absorbing molecules that mediate vision. Rhodopsin consists of an apoprotein, opsin, covalently linked to 11-cis-retinal. This receptor is coupled to the activation of phospholipase C. Porphyropsin consists of opsin covalently linked to 11-cis 3,4-didehydroretinal. The sequence is that of Rhodopsin, GQ-coupled (SCOP1) from Mizuhopecten yessoensis (Japanese scallop).